The following is a 132-amino-acid chain: Small ribosomal subunit protein uS8 (132 aa).

The protein belongs to the universal ribosomal protein uS8 family. As to quaternary structure, part of the 30S ribosomal subunit. Contacts proteins S5 and S12.

Its function is as follows. One of the primary rRNA binding proteins, it binds directly to 16S rRNA central domain where it helps coordinate assembly of the platform of the 30S subunit. The protein is Small ribosomal subunit protein uS8 of Streptococcus pneumoniae (strain Taiwan19F-14).